Consider the following 834-residue polypeptide: Copper-exporting P-type ATPase (834 aa).

HMA domains follow at residues 3-64 (QTID…YDAS) and 99-162 (DSQQ…YGAE). The Cu(+) site is built by C14, C17, C110, and C113. A run of 6 helical transmembrane segments spans residues 187–207 (WQAI…MIGD), 218–238 (LWLV…GHFY), 254–274 (TLVA…NLWP), 284–304 (LYYE…MLEA), 438–458 (AVFV…WYFF), and 464–484 (IVYT…CALG). D523 serves as the catalytic 4-aspartylphosphate intermediate. Positions 720 and 724 each coordinate Mg(2+). 2 consecutive transmembrane segments (helical) span residues 779–799 (LGAF…LWPF) and 801–821 (GTLL…ITVV).

It belongs to the cation transport ATPase (P-type) (TC 3.A.3) family. Type IB subfamily.

Its subcellular location is the cell inner membrane. It is found in the cytoplasm. It catalyses the reaction Cu(+)(in) + ATP + H2O = Cu(+)(out) + ADP + phosphate + H(+). Functionally, involved in Cu(+) export. Probably also encodes a cytoplasmic copper chaperone CopA(Z) that is produced by programmed ribosomal frameshifting. In Escherichia coli O157:H7, this protein is Copper-exporting P-type ATPase (copA).